The following is a 982-amino-acid chain: Mineralocorticoid receptor (982 aa).

Residues Met-1–Ile-601 are modulating. Polar residues predominate over residues Gln-230–Asn-242. 2 disordered regions span residues Gln-230 to Thr-328 and Ser-345 to Lys-375. A phosphoserine mark is found at Ser-249, Ser-258, Ser-282, Ser-286, and Ser-298. A compositionally biased stretch (low complexity) spans Ser-258 to Pro-299. Polar residues predominate over residues Ala-300–Thr-328. Residues Ser-345–Ser-354 are compositionally biased toward low complexity. Cys-602, Cys-605, Cys-619, Cys-622, Cys-638, Cys-644, Cys-654, and Cys-657 together coordinate Zn(2+). NR C4-type zinc fingers lie at residues Cys-602–Cys-622 and Cys-638–Cys-662. A DNA-binding region (nuclear receptor) is located at residues Cys-602–Met-667. The segment at Asn-668 to Pro-723 is hinge. A disordered region spans residues Gly-682 to Tyr-708. The segment covering Gln-690 to Ser-701 has biased composition (pro residues). The NR LBD domain occupies Gln-724–Ile-962. Positions 768 and 774 each coordinate 21-hydroxyprogesterone. Asn-768 and Gln-774 together coordinate aldosterone. Progesterone-binding residues include Asn-768 and Gln-774. The tract at residues Lys-780–Lys-783 is important for coactivator binding. Positions 815 and 943 each coordinate 21-hydroxyprogesterone. Aldosterone-binding residues include Arg-815 and Thr-943. Progesterone-binding residues include Arg-815 and Thr-943.

The protein belongs to the nuclear hormone receptor family. NR3 subfamily. Post-translationally, phosphorylated. In terms of tissue distribution, expressed in hippocampus, being restricted to the more superficial cortical layers.

It is found in the cytoplasm. Its subcellular location is the nucleus. Functionally, receptor for both mineralocorticoids (MC) such as aldosterone and glucocorticoids (GC) such as corticosterone or cortisol. Binds to mineralocorticoid response elements (MRE) and transactivates target genes. The effect of MC is to increase ion and water transport and thus raise extracellular fluid volume and blood pressure and lower potassium levels. The chain is Mineralocorticoid receptor (NR3C2) from Saimiri sciureus (Common squirrel monkey).